Reading from the N-terminus, the 198-residue chain is LIM domain-containing protein D (198 aa).

The LIM zinc-binding domain maps to 5–65; the sequence is GKCTRCQKTV…ANHYPVGGLS (61 aa).

The protein resides in the cell projection. It is found in the pseudopodium. Its subcellular location is the cytoplasm. The protein localises to the cell cortex. It localises to the cytoskeleton. Binds to F-actin and may modulate the chemotactic response during early development and contribute to the maintenance of the strength of the actin cytoskeleton. The protein is LIM domain-containing protein D (limD) of Dictyostelium discoideum (Social amoeba).